A 1066-amino-acid chain; its full sequence is Thyrotropin-releasing hormone-degrading ectoenzyme (1066 aa).

The span at 1-14 shows a compositional bias: basic and acidic residues; sequence MALDGERGEQEEEK. Positions 1 to 43 are disordered; that stretch reads MALDGERGEQEEEKKKKKKKKKRKKKEEEGAEKSSSPFAATMG. The Cytoplasmic segment spans residues 1–81; that stretch reads MALDGERGEQ…ERHIAVHKRL (81 aa). A compositionally biased stretch (basic residues) spans 15–25; sequence KKKKKKKKRKK. Position 71 is a phosphothreonine; by PKC (Thr71). Residues 82–102 traverse the membrane as a helical; Signal-anchor for type II membrane protein segment; sequence VLAFAVSIVALLAVTMLAVLL. Over 103–1066 the chain is Extracellular; sequence SLRFDECGAS…FQWLGKAMRH (964 aa). The segment at 118–176 is disordered; sequence TDGGLGGFPERDSNSSFPGSARRNHHAGGESSQRESGEVGTPGTPSAQPPSEEEREQWQ. Asn131, Asn202, Asn217, Asn264, and Asn380 each carry an N-linked (GlcNAc...) asparagine glycan. 446–450 contacts substrate; that stretch reads AAMEN. His482 contributes to the Zn(2+) binding site. The active-site Proton acceptor is the Glu483. Residues His486 and Glu505 each contribute to the Zn(2+) site. N-linked (GlcNAc...) asparagine glycosylation is found at Asn647, Asn676, Asn691, Asn705, Asn726, Asn842, and Asn948.

Belongs to the peptidase M1 family. Homodimer; disulfide-linked. Zn(2+) serves as cofactor.

It localises to the membrane. It carries out the reaction Release of the N-terminal pyroglutamyl group from pGlu-|-His-Xaa tripeptides and pGlu-|-His-Xaa-Gly tetrapeptides.. Its function is as follows. Specific inactivation of TRH after its release. This chain is Thyrotropin-releasing hormone-degrading ectoenzyme (Trhde), found in Mus musculus (Mouse).